A 105-amino-acid chain; its full sequence is Heme oxygenase (mycobilin-producing) (105 aa).

An ABM domain is found at 3–92; it reads VVKINAIEVP…VATGASLLEF (90 aa). Residues 22 to 26, H75, and 83 to 86 contribute to the heme site; these read RFAHR and VATG.

This sequence belongs to the antibiotic biosynthesis monooxygenase family. Homodimer.

The catalysed reaction is heme b + 3 AH2 + 3 O2 + 2 H(+) = mycobilin a + Fe(2+) + 3 A + 3 H2O. It carries out the reaction heme b + 3 AH2 + 3 O2 + 2 H(+) = mycobilin b + Fe(2+) + 3 A + 3 H2O. Its function is as follows. Catalyzes the oxidative degradation of the heme macrocyclic porphyrin ring in the presence of a suitable electron donor such as ascorbate or NADPH--cytochrome P450 reductase, with subsequent release of free iron. The chain is Heme oxygenase (mycobilin-producing) (mhuD) from Mycobacterium tuberculosis (strain CDC 1551 / Oshkosh).